The primary structure comprises 46 residues: Protein PsbN (46 aa).

A helical transmembrane segment spans residues 7–27; it reads ALSVAIGVLAVLFGLTGFGVY.

This sequence belongs to the PsbN family.

It localises to the cellular thylakoid membrane. Functionally, may play a role in photosystem I and II biogenesis. The sequence is that of Protein PsbN from Synechococcus sp. (strain CC9605).